We begin with the raw amino-acid sequence, 1342 residues long: DNA-directed RNA polymerase subunit beta (1342 aa).

Belongs to the RNA polymerase beta chain family. As to quaternary structure, the RNAP catalytic core consists of 2 alpha, 1 beta, 1 beta' and 1 omega subunit. When a sigma factor is associated with the core the holoenzyme is formed, which can initiate transcription.

The enzyme catalyses RNA(n) + a ribonucleoside 5'-triphosphate = RNA(n+1) + diphosphate. Functionally, DNA-dependent RNA polymerase catalyzes the transcription of DNA into RNA using the four ribonucleoside triphosphates as substrates. In Aliivibrio fischeri (strain MJ11) (Vibrio fischeri), this protein is DNA-directed RNA polymerase subunit beta.